Here is a 333-residue protein sequence, read N- to C-terminus: Adenosine deaminase (333 aa).

Zn(2+)-binding residues include histidine 12 and histidine 14. The substrate site is built by histidine 14, aspartate 16, and glycine 170. Histidine 197 contacts Zn(2+). Glutamate 200 serves as the catalytic Proton donor. Position 278 (aspartate 278) interacts with Zn(2+). Aspartate 279 provides a ligand contact to substrate.

It belongs to the metallo-dependent hydrolases superfamily. Adenosine and AMP deaminases family. Adenosine deaminase subfamily. The cofactor is Zn(2+).

It carries out the reaction adenosine + H2O + H(+) = inosine + NH4(+). The catalysed reaction is 2'-deoxyadenosine + H2O + H(+) = 2'-deoxyinosine + NH4(+). Catalyzes the hydrolytic deamination of adenosine and 2-deoxyadenosine. The protein is Adenosine deaminase of Klebsiella pneumoniae subsp. pneumoniae (strain ATCC 700721 / MGH 78578).